The sequence spans 259 residues: Putative carbamate hydrolase RutD (259 aa).

It belongs to the AB hydrolase superfamily. Hydrolase RutD family.

It carries out the reaction carbamate + 2 H(+) = NH4(+) + CO2. Its function is as follows. Involved in pyrimidine catabolism. May facilitate the hydrolysis of carbamate, a reaction that can also occur spontaneously. The protein is Putative carbamate hydrolase RutD of Pseudomonas syringae pv. syringae (strain B728a).